The primary structure comprises 172 residues: Co-chaperone protein HscB homolog (172 aa).

The J domain maps to 2–69 (NHFELFNLPV…DSRAAYLLAL (68 aa)).

Belongs to the HscB family. In terms of assembly, interacts with HscA and stimulates its ATPase activity.

Its function is as follows. Co-chaperone involved in the maturation of iron-sulfur cluster-containing proteins. Seems to help targeting proteins to be folded toward HscA. The sequence is that of Co-chaperone protein HscB homolog from Acinetobacter baumannii (strain SDF).